Consider the following 190-residue polypeptide: Protein A52 (190 aa).

This sequence belongs to the orthopoxvirus A52R protein family. As to quaternary structure, interacts with host TRAF6 and IRAK2.

Bcl-2-like protein which targets host toll-like receptor signaling complexes to suppress innate immune response. Interacts with host TRAF6 to activate p38 and subsequently induce the expression of several cytokines such as IL-10. Also associates with host IRAK2 to inhibit NF-kappa-B signaling. This chain is Protein A52, found in Homo sapiens (Human).